The chain runs to 867 residues: Leucine--tRNA ligase (867 aa).

The 'HIGH' region signature appears at 43–53 (PYPSGRLHMGH). The 'KMSKS' region motif lies at 627–631 (KMSKS). Lys630 contacts ATP.

This sequence belongs to the class-I aminoacyl-tRNA synthetase family.

Its subcellular location is the cytoplasm. It catalyses the reaction tRNA(Leu) + L-leucine + ATP = L-leucyl-tRNA(Leu) + AMP + diphosphate. The sequence is that of Leucine--tRNA ligase from Phenylobacterium zucineum (strain HLK1).